The chain runs to 271 residues: RELT-like protein 1 (271 aa).

An N-terminal signal peptide occupies residues 1–23; the sequence is MAPRGLPGSAVLAAAVFVGGAVS. Residues 24–57 lie on the Extracellular side of the membrane; sequence SPLVRSDHSGSHPLPSKTETTPSPTNNNGNGHPE. The interval 27 to 52 is disordered; the sequence is VRSDHSGSHPLPSKTETTPSPTNNNG. The segment covering 36 to 52 has biased composition (low complexity); sequence PLPSKTETTPSPTNNNG. The chain crosses the membrane as a helical span at residues 58–78; that stretch reads YIAYALVPVFFVMGLFGVLIC. Residues 79–271 lie on the Cytoplasmic side of the membrane; the sequence is HLLKKKGYRC…PVKRQQSDSE (193 aa). Serine 109 and serine 114 each carry phosphoserine. Disordered regions lie at residues 144–168 and 231–271; these read CDPE…LSPG and TKVE…SDSE. Over residues 155–165 the composition is skewed to pro residues; sequence PGSPPVSPGPL. Positions 231–244 are enriched in basic and acidic residues; it reads TKVEPKSNQKERRS. 2 positions are modified to phosphoserine: serine 244 and serine 247.

It belongs to the RELT family. In terms of assembly, interacts with RELT, RELL2, OXSR1 and PLSCR1.

It is found in the cell membrane. Its function is as follows. Induces activation of MAPK14/p38 cascade, when overexpressed. Induces apoptosis, when overexpressed. The chain is RELT-like protein 1 (RELL1) from Bos taurus (Bovine).